The primary structure comprises 179 residues: Signal peptidase complex subunit 2 (179 aa).

Residues 1-48 (MSGNNVQEEDSTFHVSNLYSETEIKKITQDFISEKIREQNFEEIVKYS) are Cytoplasmic-facing. The helical transmembrane segment at 49 to 69 (NIRIFLSLVLIVIGTYCSIFV) threads the bilayer. At 70–74 (QYKKN) the chain is on the extracellular side. The helical transmembrane segment at 75-95 (PVIMIQLLVAFFVVSTTLIIF) threads the bilayer. At 96–179 (EYFFFDDVFM…AHGRTLKLKN (84 aa)) the chain is on the cytoplasmic side.

Belongs to the SPCS2 family. Component of the signal peptidase complex (SPC) composed of a catalytic subunit SEC11/SPC21 and three accessory subunits SPC25, SPC3/SPC22, SPC1/SPC12. The complex induces a local thinning of the ER membrane which is used to measure the length of the signal peptide (SP) h-region of protein substrates. This ensures the selectivity of the complex towards h-regions shorter than 18-20 amino acids. Within the complex, interacts with SEC11/SPC21. Component of a complex composed of SPC25 and PMV; the interaction is mediated via the transmembrane domains. The complex interacts with the SEC61 channel-forming translocon complex and is involved in the recognition and import of PEXEL motif-containing proteins into the ER for subsequent export.

Its subcellular location is the endoplasmic reticulum membrane. Component of the signal peptidase complex (SPC) which catalyzes the cleavage of N-terminal signal sequences from nascent proteins as they are translocated into the lumen of the endoplasmic reticulum. Enhances the enzymatic activity of SPC and facilitates the interactions between different components of the translocation site. Also, regulatory component of the CSP25-plasmepsin PMV complex which cleaves the pentameric localization motif RxLxE/Q/D (termed Plasmodium export element (PEXEL)) located downstream of the N-terminal secretory signal sequence of several proteins. The chain is Signal peptidase complex subunit 2 from Plasmodium falciparum (isolate 3D7).